The primary structure comprises 181 residues: GTP cyclohydrolase 1 2 (181 aa).

The protein belongs to the GTP cyclohydrolase I family. As to quaternary structure, homomer.

It catalyses the reaction GTP + H2O = 7,8-dihydroneopterin 3'-triphosphate + formate + H(+). The protein operates within cofactor biosynthesis; 7,8-dihydroneopterin triphosphate biosynthesis; 7,8-dihydroneopterin triphosphate from GTP: step 1/1. In Pseudomonas syringae pv. tomato (strain ATCC BAA-871 / DC3000), this protein is GTP cyclohydrolase 1 2.